Consider the following 298-residue polypeptide: Ectoine dioxygenase (298 aa).

Positions 1 to 18 (MLQQAIDRDPVDRIDRYP) are enriched in basic and acidic residues. A disordered region spans residues 1 to 26 (MLQQAIDRDPVDRIDRYPTRTAEPAP). Residue Gln133 participates in L-ectoine binding. Fe cation is bound by residues His150, Asp152, and His251.

The protein belongs to the PhyH family. EctD subfamily. In terms of assembly, homodimer. It depends on Fe(2+) as a cofactor.

It catalyses the reaction L-ectoine + 2-oxoglutarate + O2 = 5-hydroxyectoine + succinate + CO2. Its function is as follows. Involved in the biosynthesis of 5-hydroxyectoine, called compatible solute, which helps organisms to survive extreme osmotic stress by acting as a highly soluble organic osmolyte. Catalyzes the 2-oxoglutarate-dependent selective hydroxylation of L-ectoine to yield (4S,5S)-5-hydroxyectoine. The sequence is that of Ectoine dioxygenase from Nocardia farcinica (strain IFM 10152).